The chain runs to 327 residues: GMP reductase (327 aa).

C176 functions as the Thioimidate intermediate in the catalytic mechanism. An NADP(+)-binding site is contributed by 205–228 (IIADGGIRTHGDIAKSIRFGASMV).

This sequence belongs to the IMPDH/GMPR family. GuaC type 2 subfamily.

It carries out the reaction IMP + NH4(+) + NADP(+) = GMP + NADPH + 2 H(+). Its function is as follows. Catalyzes the irreversible NADPH-dependent deamination of GMP to IMP. It functions in the conversion of nucleobase, nucleoside and nucleotide derivatives of G to A nucleotides, and in maintaining the intracellular balance of A and G nucleotides. This Streptococcus pyogenes serotype M6 (strain ATCC BAA-946 / MGAS10394) protein is GMP reductase.